We begin with the raw amino-acid sequence, 314 residues long: tRNA dimethylallyltransferase (314 aa).

Residue 12 to 19 (GPTASGKT) participates in ATP binding. 14-19 (TASGKT) contributes to the substrate binding site. Interaction with substrate tRNA stretches follow at residues 37–40 (DSAL), 161–165 (QRIQR), and 244–249 (RCVGYR).

It belongs to the IPP transferase family. Monomer. Mg(2+) is required as a cofactor.

The enzyme catalyses adenosine(37) in tRNA + dimethylallyl diphosphate = N(6)-dimethylallyladenosine(37) in tRNA + diphosphate. Functionally, catalyzes the transfer of a dimethylallyl group onto the adenine at position 37 in tRNAs that read codons beginning with uridine, leading to the formation of N6-(dimethylallyl)adenosine (i(6)A). This chain is tRNA dimethylallyltransferase, found in Janthinobacterium sp. (strain Marseille) (Minibacterium massiliensis).